Consider the following 158-residue polypeptide: Glycine/sarcosine/betaine reductase complex component A (158 aa).

The active site involves Sec-44. A non-standard amino acid (selenocysteine) is located at residue Sec-44.

This sequence belongs to the GrdA family. In terms of assembly, monomer. Component of the glycine, sarcosine and betaine reductase complexes, together with components B and C.

The catalysed reaction is acetyl phosphate + [thioredoxin]-disulfide + NH4(+) + H2O = [thioredoxin]-dithiol + glycine + phosphate + H(+). The enzyme catalyses acetyl phosphate + methylamine + [thioredoxin]-disulfide + H2O = sarcosine + [thioredoxin]-dithiol + phosphate + H(+). It catalyses the reaction acetyl phosphate + trimethylamine + [thioredoxin]-disulfide + H2O = glycine betaine + [thioredoxin]-dithiol + phosphate + H(+). Functionally, in the first step of glycine, betaine and sarcosine reductases, the substrate is bound to component PB via a Schiff base intermediate. Then the PB-activated substrate is nucleophilically attacked by the selenol anion of component PA to transform it to a carboxymethylated selenoether and the respective amine. By action of component PC, acetyl phosphate is formed, leaving component PA in its oxidized state. Finally component PA becomes reduced by the thioredoxin system to start a new catalytic cycle of reductive deamination. This Alkaliphilus metalliredigens (strain QYMF) protein is Glycine/sarcosine/betaine reductase complex component A.